The chain runs to 157 residues: Cytochrome P450 monooxygenase atG (157 aa).

Position 97 (Cys97) interacts with heme.

Belongs to the cytochrome P450 family. It depends on heme as a cofactor.

The protein operates within secondary metabolite biosynthesis. In terms of biological role, cytochrome P450 monooxygenase; part of the gene cluster that mediates the biosynthesis of terreic acid, a quinone epoxide inhibitor of Bruton's tyrosine kinase (BTK). The first step of the pathway is the synthesis of 6-methylsalicylic acid (6-MSA) by the 6-methylsalicylic acid synthase atX. In the biosynthesis of 6-MSA, atX utilizes one acetyl-CoA and three malonyl-CoAs as its substrates and catalyzes a series of programmed reactions including Claisen condensation, reduction, aldol cyclization, and the hydrolytic cleavage that yields 6-MSA. The 6-methylsalicylate 1-monooxygenase atA then catalyzes the decarboxylative hydroxylation of 6-MSA to 3-methylcatechol. The next step is the conversion of 3-methylcatechol to 3-methyl-1,2,4-benzenetriol by cytochrome P450 monooxygenase atE, which is enhanced by cytochrome P450 monooxygenase atG. Then, the epoxidase atD catalyzes the epoxidation and hydroxyl oxidation of 3-methyl-1,2,4-benzenetriol to terremutin. Lastly, GMC oxidoreductase atC oxidizes terremutin to terreic acid. This Aspergillus terreus (strain NIH 2624 / FGSC A1156) protein is Cytochrome P450 monooxygenase atG.